The sequence spans 333 residues: Glycerol-3-phosphate dehydrogenase [NAD(P)+] (333 aa).

The NADPH site is built by tryptophan 13, lysine 33, and lysine 108. 2 residues coordinate sn-glycerol 3-phosphate: lysine 108 and glycine 138. Position 142 (serine 142) interacts with NADPH. Lysine 193, aspartate 246, serine 256, arginine 257, and asparagine 258 together coordinate sn-glycerol 3-phosphate. The active-site Proton acceptor is lysine 193. Position 257 (arginine 257) interacts with NADPH. 2 residues coordinate NADPH: valine 281 and glutamate 283.

This sequence belongs to the NAD-dependent glycerol-3-phosphate dehydrogenase family.

Its subcellular location is the cytoplasm. It carries out the reaction sn-glycerol 3-phosphate + NAD(+) = dihydroxyacetone phosphate + NADH + H(+). The catalysed reaction is sn-glycerol 3-phosphate + NADP(+) = dihydroxyacetone phosphate + NADPH + H(+). The protein operates within membrane lipid metabolism; glycerophospholipid metabolism. Its function is as follows. Catalyzes the reduction of the glycolytic intermediate dihydroxyacetone phosphate (DHAP) to sn-glycerol 3-phosphate (G3P), the key precursor for phospholipid synthesis. The sequence is that of Glycerol-3-phosphate dehydrogenase [NAD(P)+] from Bifidobacterium longum (strain DJO10A).